A 372-amino-acid chain; its full sequence is Glutamate 5-kinase (372 aa).

K14 contributes to the ATP binding site. S54, D141, and N153 together coordinate substrate. 173-174 serves as a coordination point for ATP; it reads TD. The PUA domain occupies 280-358; sequence RGTVVIDDGA…SQIESLLGYS (79 aa).

The protein belongs to the glutamate 5-kinase family.

It is found in the cytoplasm. The enzyme catalyses L-glutamate + ATP = L-glutamyl 5-phosphate + ADP. It participates in amino-acid biosynthesis; L-proline biosynthesis; L-glutamate 5-semialdehyde from L-glutamate: step 1/2. In terms of biological role, catalyzes the transfer of a phosphate group to glutamate to form L-glutamate 5-phosphate. In Methylibium petroleiphilum (strain ATCC BAA-1232 / LMG 22953 / PM1), this protein is Glutamate 5-kinase.